Here is a 286-residue protein sequence, read N- to C-terminus: Probable ketoamine kinase EAE_16955 (286 aa).

ATP is bound at residue 92 to 94 (EYL). Residue aspartate 194 is the Proton acceptor of the active site.

The protein belongs to the fructosamine kinase family.

In terms of biological role, ketoamine kinase that phosphorylates ketoamines on the third carbon of the sugar moiety to generate ketoamine 3-phosphate. The protein is Probable ketoamine kinase EAE_16955 of Klebsiella aerogenes (strain ATCC 13048 / DSM 30053 / CCUG 1429 / JCM 1235 / KCTC 2190 / NBRC 13534 / NCIMB 10102 / NCTC 10006 / CDC 819-56) (Enterobacter aerogenes).